The chain runs to 415 residues: Histidine--tRNA ligase (415 aa).

It belongs to the class-II aminoacyl-tRNA synthetase family. As to quaternary structure, homodimer.

Its subcellular location is the cytoplasm. The catalysed reaction is tRNA(His) + L-histidine + ATP = L-histidyl-tRNA(His) + AMP + diphosphate + H(+). The protein is Histidine--tRNA ligase of Clostridium botulinum (strain Kyoto / Type A2).